The following is a 616-amino-acid chain: Mitochondrial Rho GTPase 2 (616 aa).

The Cytoplasmic segment spans residues 1-590 (MKRDVRILLL…HDTELSTASF (590 aa)). Positions 2-168 (KRDVRILLLG…FYYAQKAVLH (167 aa)) constitute a Miro 1 domain. G16, K17, T18, and S19 together coordinate GTP. T18 is a binding site for Mg(2+). D57 serves as a coordination point for Mg(2+). Positions 59, 118, 119, 121, 149, and 150 each coordinate GTP. EF-hand domains follow at residues 184–219 (QCKKALTRIFTISEQDNNQILSDEELNFFQQSCFGN) and 304–339 (FGYQFLQKAFEKHDLDEDGALSPSELQSFFSVFPYT). Ca(2+) contacts are provided by D199, N201, E208, D317, D319, D321, and E328. One can recognise a Miro 2 domain in the interval 416–577 (RNVFLCRVIG…YSKLATAAAF (162 aa)). 5 residues coordinate GTP: G428, G430, K431, S432, and A433. S432 contributes to the Mg(2+) binding site. Position 474 (E474) interacts with Mg(2+). The GTP site is built by K528, D530, and C559. The helical; Anchor for type IV membrane protein transmembrane segment at 591–613 (WLRVALGATVAAVVGFTLYKALL) threads the bilayer. The Mitochondrial intermembrane portion of the chain corresponds to 614 to 616 (RSK).

Belongs to the mitochondrial Rho GTPase family. Homodimer.

It localises to the mitochondrion outer membrane. The enzyme catalyses GTP + H2O = GDP + phosphate + H(+). The catalysed reaction is ATP + H2O = ADP + phosphate + H(+). It carries out the reaction UTP + H2O = UDP + phosphate + H(+). Functionally, atypical mitochondrial nucleoside-triphosphatase (NTPase) involved in mitochondrial trafficking. Probably involved in control of anterograde transport of mitochondria and their subcellular distribution. Can hydrolyze GTP, ATP and UTP. In Xenopus tropicalis (Western clawed frog), this protein is Mitochondrial Rho GTPase 2 (rhot2).